A 565-amino-acid polypeptide reads, in one-letter code: Tyrosine-protein phosphatase non-receptor type 5 (565 aa).

Residues 1 to 16 show a composition bias toward basic and acidic residues; it reads MNYEGARSERENHAAD. A disordered region spans residues 1–80; it reads MNYEGARSER…KPPPRGAGSH (80 aa). A compositionally biased stretch (pro residues) spans 56-75; sequence MPPPPPPSPPSDPAQKPPPR. 2 consecutive transmembrane segments (helical) span residues 88–108 and 146–166; these read LCLFAASQFLLACGVLWFSGY and LLLVFLSVGLVLVTTLVWHLL. The segment at 169-189 is disordered; the sequence is PPEPPTPLPPEDRRQSVSRQP. At Ser245 the chain carries Phosphoserine; by PKA. The residue at position 255 (Thr255) is a Phosphothreonine; by MAPK. Residue Ser268 is modified to Phosphoserine; by MAPK. The 256-residue stretch at 300–555 folds into the Tyrosine-protein phosphatase domain; it reads LQAEFFEIPM…QFVHHVMSLY (256 aa). Residues Asp461, 496–502, and Gln540 contribute to the substrate site; that span reads CSAGIGR. Cys496 serves as the catalytic Phosphocysteine intermediate.

It belongs to the protein-tyrosine phosphatase family. Non-receptor class subfamily. Phosphorylation at Ser-245 by PKA deactivates PTPN5. Phosphorylation at Thr-255 and Ser-268 by MAPKs stabilizes the phosphatase, dephosphorylation of these sites results in ubiquitin-mediated degradation of the active phosphatase.

It is found in the endoplasmic reticulum membrane. It carries out the reaction O-phospho-L-tyrosyl-[protein] + H2O = L-tyrosyl-[protein] + phosphate. Functionally, may regulate the activity of several effector molecules involved in synaptic plasticity and neuronal cell survival, including MAPKs, Src family kinases and NMDA receptors. The polypeptide is Tyrosine-protein phosphatase non-receptor type 5 (PTPN5) (Homo sapiens (Human)).